A 4731-amino-acid chain; its full sequence is Dynein axonemal heavy chain 8 (4731 aa).

The disordered stretch occupies residues 1 to 145 (MESEEGNAEP…SKFRRSMTGI (145 aa)). Pro residues predominate over residues 9-55 (EPPPPSEEAPPPVVEEAPPPLPPEDTAPPPPEEQAPPPEGDAAPPPT). The span at 66 to 75 (EAPHPEDPKL) shows a compositional bias: basic and acidic residues. The segment covering 94 to 106 (SDEEVTLPEDEES) has biased composition (acidic residues). Polar residues predominate over residues 122-133 (SVLSDGISQSSR). The stretch at 145–169 (IPNLQETLKEKQARFREARENRKMK) forms a coiled coil. Ser917 bears the Phosphoserine mark. Positions 1177 to 1201 (FQNNSRGSDQPPASGKPLKKEERSF) are disordered. Residues 1543-1567 (DVDIEKINAELQEFQNRCRKLPRAL) are a coiled coil. AAA regions lie at residues 2049–2271 (YQNE…VLRT), 2331–2550 (SAVD…KLSL), 2657–2910 (FYPT…IWQG), and 3021–3275 (QFNE…YRRR). ATP contacts are provided by residues 2087 to 2094 (GPAGTGKT) and 2369 to 2376 (GPSGSGKT). A stalk region spans residues 3290-3587 (YKSIYTDKVK…MDLLNDADMC (298 aa)). 3 coiled-coil regions span residues 3313 to 3405 (DKLM…ALNT), 3531 to 3583 (LKAN…LLND), and 3836 to 3871 (RVIL…DNLL). AAA regions lie at residues 3673–3903 (LVDP…EVSE) and 4118–4332 (ARKY…FIQN).

It belongs to the dynein heavy chain family. In terms of assembly, consists of at least two heavy chains and a number of intermediate and light chains. In terms of tissue distribution, isoform 1 and/or isoform 2 are expressed in spermatocytes and mature sperm (at protein level). Testis-specific. Accumulates exclusively in mid to late spermatocytes.

It localises to the cytoplasm. Its subcellular location is the cytoskeleton. The protein resides in the flagellum axoneme. Functionally, force generating protein component of the outer dynein arms (ODAs) in the sperm flagellum. Produces force towards the minus ends of microtubules. Dynein has ATPase activity; the force-producing power stroke is thought to occur on release of ADP. Involved in sperm motility; implicated in sperm flagellar assembly. This chain is Dynein axonemal heavy chain 8 (Dnah8), found in Mus musculus (Mouse).